We begin with the raw amino-acid sequence, 1036 residues long: Isoleucine--tRNA ligase (1036 aa).

The short motif at 46–56 is the 'HIGH' region element; sequence PFATGLPHYGH. The 'KMSKS' region signature appears at 589–593; it reads KMSKR. K592 lines the ATP pocket.

The protein belongs to the class-I aminoacyl-tRNA synthetase family. IleS type 2 subfamily. In terms of assembly, monomer. Zn(2+) is required as a cofactor.

It is found in the cytoplasm. The catalysed reaction is tRNA(Ile) + L-isoleucine + ATP = L-isoleucyl-tRNA(Ile) + AMP + diphosphate. In terms of biological role, catalyzes the attachment of isoleucine to tRNA(Ile). As IleRS can inadvertently accommodate and process structurally similar amino acids such as valine, to avoid such errors it has two additional distinct tRNA(Ile)-dependent editing activities. One activity is designated as 'pretransfer' editing and involves the hydrolysis of activated Val-AMP. The other activity is designated 'posttransfer' editing and involves deacylation of mischarged Val-tRNA(Ile). The polypeptide is Isoleucine--tRNA ligase (Chlamydia trachomatis serovar A (strain ATCC VR-571B / DSM 19440 / HAR-13)).